A 329-amino-acid chain; its full sequence is GTP 3',8-cyclase (329 aa).

A Radical SAM core domain is found at 8–234 (AFARKFYYLR…QLRQRSDGPA (227 aa)). A GTP-binding site is contributed by Arg17. 2 residues coordinate [4Fe-4S] cluster: Cys24 and Cys28. Residue Tyr30 coordinates S-adenosyl-L-methionine. A [4Fe-4S] cluster-binding site is contributed by Cys31. Arg68 provides a ligand contact to GTP. S-adenosyl-L-methionine is bound at residue Gly72. Residue Thr99 coordinates GTP. Residue Ser123 participates in S-adenosyl-L-methionine binding. Lys160 provides a ligand contact to GTP. Met194 provides a ligand contact to S-adenosyl-L-methionine. Residues Cys257 and Cys260 each contribute to the [4Fe-4S] cluster site. 262 to 264 (RLR) serves as a coordination point for GTP. Cys274 is a binding site for [4Fe-4S] cluster.

This sequence belongs to the radical SAM superfamily. MoaA family. As to quaternary structure, monomer and homodimer. [4Fe-4S] cluster serves as cofactor.

It carries out the reaction GTP + AH2 + S-adenosyl-L-methionine = (8S)-3',8-cyclo-7,8-dihydroguanosine 5'-triphosphate + 5'-deoxyadenosine + L-methionine + A + H(+). Its pathway is cofactor biosynthesis; molybdopterin biosynthesis. In terms of biological role, catalyzes the cyclization of GTP to (8S)-3',8-cyclo-7,8-dihydroguanosine 5'-triphosphate. The chain is GTP 3',8-cyclase from Escherichia coli O127:H6 (strain E2348/69 / EPEC).